The primary structure comprises 328 residues: DNA-directed RNA polymerase subunit alpha (328 aa).

The alpha N-terminal domain (alpha-NTD) stretch occupies residues 1-230 (MSNHGLQMPE…DHVSFFIQLE (230 aa)). Positions 248-328 (RIRELLAQPV…EEYLEEKKAS (81 aa)) are alpha C-terminal domain (alpha-CTD).

The protein belongs to the RNA polymerase alpha chain family. Homodimer. The RNAP catalytic core consists of 2 alpha, 1 beta, 1 beta' and 1 omega subunit. When a sigma factor is associated with the core the holoenzyme is formed, which can initiate transcription.

It catalyses the reaction RNA(n) + a ribonucleoside 5'-triphosphate = RNA(n+1) + diphosphate. DNA-dependent RNA polymerase catalyzes the transcription of DNA into RNA using the four ribonucleoside triphosphates as substrates. In Salinibacter ruber (strain DSM 13855 / M31), this protein is DNA-directed RNA polymerase subunit alpha.